Reading from the N-terminus, the 282-residue chain is Formamidopyrimidine-DNA glycosylase (282 aa).

Catalysis depends on P2, which acts as the Schiff-base intermediate with DNA. The active-site Proton donor is E3. The active-site Proton donor; for beta-elimination activity is K60. DNA-binding residues include H99, R118, and R163. An FPG-type zinc finger spans residues 248–282 (WVYGRTGEPCRVCGTSIERLKLGGRSAHFCPRCQA). Catalysis depends on R272, which acts as the Proton donor; for delta-elimination activity.

It belongs to the FPG family. In terms of assembly, monomer. It depends on Zn(2+) as a cofactor.

The catalysed reaction is Hydrolysis of DNA containing ring-opened 7-methylguanine residues, releasing 2,6-diamino-4-hydroxy-5-(N-methyl)formamidopyrimidine.. The enzyme catalyses 2'-deoxyribonucleotide-(2'-deoxyribose 5'-phosphate)-2'-deoxyribonucleotide-DNA = a 3'-end 2'-deoxyribonucleotide-(2,3-dehydro-2,3-deoxyribose 5'-phosphate)-DNA + a 5'-end 5'-phospho-2'-deoxyribonucleoside-DNA + H(+). Its function is as follows. Involved in base excision repair of DNA damaged by oxidation or by mutagenic agents. Acts as a DNA glycosylase that recognizes and removes damaged bases. Has a preference for oxidized purines, such as 7,8-dihydro-8-oxoguanine (8-oxoG). Has AP (apurinic/apyrimidinic) lyase activity and introduces nicks in the DNA strand. Cleaves the DNA backbone by beta-delta elimination to generate a single-strand break at the site of the removed base with both 3'- and 5'-phosphates. This Rippkaea orientalis (strain PCC 8801 / RF-1) (Cyanothece sp. (strain PCC 8801)) protein is Formamidopyrimidine-DNA glycosylase.